Consider the following 275-residue polypeptide: Phosphonoacetaldehyde hydrolase (275 aa).

D15 (nucleophile) is an active-site residue. D15 and A17 together coordinate Mg(2+). The active-site Schiff-base intermediate with substrate is the K56. D189 provides a ligand contact to Mg(2+).

Belongs to the HAD-like hydrolase superfamily. PhnX family. As to quaternary structure, homodimer. Mg(2+) is required as a cofactor.

The enzyme catalyses phosphonoacetaldehyde + H2O = acetaldehyde + phosphate + H(+). Involved in phosphonate degradation. The polypeptide is Phosphonoacetaldehyde hydrolase (Pseudomonas putida (strain W619)).